A 620-amino-acid polypeptide reads, in one-letter code: Glutathione-regulated potassium-efflux system protein KefC (620 aa).

The next 12 membrane-spanning stretches (helical) occupy residues 4-24 (HTLV…PIAV), 26-46 (LGLG…PWGL), 54-74 (SILH…GLEL), 90-110 (GALQ…LLGL), 114-134 (VAEL…MQAM), 149-169 (FAVL…IPLL), 178-198 (MGAF…VVLL), 218-238 (VFSA…EEVG), 270-290 (GLLL…GTLL), 294-314 (LRIV…LWLI), 327-347 (WFAV…GAAQ), and 359-379 (SLTL…VILN). Residues 399–518 (QPRVIIAGFG…AGVEKPERET (120 aa)) enclose the RCK N-terminal domain. Residues 597–620 (GWQGTEEGKHTGNMADEPETKPSS) form a disordered region.

Belongs to the monovalent cation:proton antiporter 2 (CPA2) transporter (TC 2.A.37) family. KefC subfamily. As to quaternary structure, homodimer. Interacts with the regulatory subunit KefF.

It is found in the cell inner membrane. Pore-forming subunit of a potassium efflux system that confers protection against electrophiles. Catalyzes K(+)/H(+) antiport. The sequence is that of Glutathione-regulated potassium-efflux system protein KefC from Escherichia coli O139:H28 (strain E24377A / ETEC).